A 126-amino-acid chain; its full sequence is MQRIMLRGKLHQARVTHAVLNYEGSCGIDQDFLDAAGIVEYEAIDIYNIENGERFSTYAISGERGSRMISLNGAAARKAAVGDRIIICAYGPMTEDEVAQHKPRLVYLDAQNNIVRTSKDIPLQLA.

The Schiff-base intermediate with substrate; via pyruvic acid role is filled by Ser-25. A Pyruvic acid (Ser) modification is found at Ser-25. Thr-57 contributes to the substrate binding site. Tyr-58 acts as the Proton donor in catalysis. 73 to 75 (GAA) provides a ligand contact to substrate.

Belongs to the PanD family. Heterooctamer of four alpha and four beta subunits. Pyruvate serves as cofactor. Is synthesized initially as an inactive proenzyme, which is activated by self-cleavage at a specific serine bond to produce a beta-subunit with a hydroxyl group at its C-terminus and an alpha-subunit with a pyruvoyl group at its N-terminus.

The protein localises to the cytoplasm. The enzyme catalyses L-aspartate + H(+) = beta-alanine + CO2. The protein operates within cofactor biosynthesis; (R)-pantothenate biosynthesis; beta-alanine from L-aspartate: step 1/1. Catalyzes the pyruvoyl-dependent decarboxylation of aspartate to produce beta-alanine. In Tolumonas auensis (strain DSM 9187 / NBRC 110442 / TA 4), this protein is Aspartate 1-decarboxylase.